The following is a 220-amino-acid chain: Eukaryotic translation initiation factor 3 subunit B (220 aa).

The tract at residues 1–94 is sufficient for interaction with HCR1 and TIF32; that stretch reads MPEPIAFDES…LIIELDSAAA (94 aa). Residues 1 to 220 are sufficient for interaction with PIC8; sequence MPEPIAFDES…GVQAWGGERI (220 aa). The 84-residue stretch at 37-120 folds into the RRM domain; sequence HFVICDGAPI…HRLAVNKLPD (84 aa).

It belongs to the eIF-3 subunit B family. In terms of assembly, component of the eukaryotic translation initiation factor 3 (eIF-3) complex.

It is found in the cytoplasm. In terms of biological role, RNA-binding component of the eukaryotic translation initiation factor 3 (eIF-3) complex, which is involved in protein synthesis of a specialized repertoire of mRNAs and, together with other initiation factors, stimulates binding of mRNA and methionyl-tRNAi to the 40S ribosome. The eIF-3 complex specifically targets and initiates translation of a subset of mRNAs involved in cell proliferation. In Pichia angusta (Yeast), this protein is Eukaryotic translation initiation factor 3 subunit B (TIF32).